Reading from the N-terminus, the 776-residue chain is Protein phosphatase 1 regulatory subunit 21 (776 aa).

Coiled-coil stretches lie at residues 4 to 206, 432 to 466, and 555 to 597; these read GDLQ…LKTL, RLHD…TTND, and ESRE…KETL.

In terms of assembly, component of the FERRY complex.

It is found in the early endosome. Functionally, component of the FERRY complex (Five-subunit Endosomal Rab5 and RNA/ribosome intermediary). The FERRY complex directly interacts with mRNAs and RAB5A, and functions as a RAB5A effector involved in the localization and the distribution of specific mRNAs most likely by mediating their endosomal transport. The complex recruits mRNAs and ribosomes to early endosomes through direct mRNA-interaction. Putative regulator of protein phosphatase 1 (PP1) activity. May play a role in the endosomal sorting process or in endosome maturation pathway. This Xenopus laevis (African clawed frog) protein is Protein phosphatase 1 regulatory subunit 21 (ppp1r21).